The chain runs to 396 residues: NADH-quinone oxidoreductase subunit D 1 (396 aa).

The protein belongs to the complex I 49 kDa subunit family. As to quaternary structure, NDH-1 is composed of 14 different subunits. Subunits NuoB, C, D, E, F, and G constitute the peripheral sector of the complex.

Its subcellular location is the cell inner membrane. It carries out the reaction a quinone + NADH + 5 H(+)(in) = a quinol + NAD(+) + 4 H(+)(out). Functionally, NDH-1 shuttles electrons from NADH, via FMN and iron-sulfur (Fe-S) centers, to quinones in the respiratory chain. The immediate electron acceptor for the enzyme in this species is believed to be ubiquinone. Couples the redox reaction to proton translocation (for every two electrons transferred, four hydrogen ions are translocated across the cytoplasmic membrane), and thus conserves the redox energy in a proton gradient. The sequence is that of NADH-quinone oxidoreductase subunit D 1 from Nitrobacter hamburgensis (strain DSM 10229 / NCIMB 13809 / X14).